We begin with the raw amino-acid sequence, 833 residues long: Phosphatidylinositol-3-phosphatase myotubularin-2 (833 aa).

A GRAM domain is found at 42-109; the sequence is GSYSNLDCLL…VAIEKFNKLA (68 aa). The Myotubularin phosphatase domain occupies 181-647; the sequence is TNPKERLLNE…LAPTLWPQFH (467 aa). Residues 329–332, 354–355, 440–446, and Arg486 each bind substrate; these read NGAK, NI, and CSDGWDR. Cys440 functions as the Phosphocysteine intermediate in the catalytic mechanism. The disordered stretch occupies residues 503–530; that stretch reads QSSSARSFPSSPVRQSPGSAAAQSSSSS. Residues 504–530 are compositionally biased toward low complexity; that stretch reads SSSARSFPSSPVRQSPGSAAAQSSSSS. Positions 660–717 form a coiled coil; that stretch reads ETEDQCRAMTVKYSEMKKEKEEAERKVDELSSAMESLNEELLNERDISRAARESAKRA. Residues 753 to 772 form a disordered region; that stretch reads KCSHSIPQKQSEDNTTDVSE.

Belongs to the protein-tyrosine phosphatase family. Non-receptor class myotubularin subfamily. In terms of tissue distribution, mostly expressed in flowers and roots, and, to a lower extent, in siliques and leaves.

The protein localises to the cytoplasm. The catalysed reaction is a 1,2-diacyl-sn-glycero-3-phospho-(1D-myo-inositol-3-phosphate) + H2O = a 1,2-diacyl-sn-glycero-3-phospho-(1D-myo-inositol) + phosphate. It catalyses the reaction a 1,2-diacyl-sn-glycero-3-phospho-(1D-myo-inositol-3,5-bisphosphate) + H2O = a 1,2-diacyl-sn-glycero-3-phospho-(1D-myo-inositol-5-phosphate) + phosphate. Functionally, phosphatase with phosphoinositide 3'-phosphatase activity that can use phosphatidylinositol-3-phosphate (PtdIns3P) and phosphatidylinositol-3,5-diphosphate (PtdIns3,5P(2)) as substrates and produces phosphatidylinositol-5-phosphate (PtdIns5P); participates in pathway(s) that transfer gene regulatory signals to the nucleus. The sequence is that of Phosphatidylinositol-3-phosphatase myotubularin-2 (MTM2) from Arabidopsis thaliana (Mouse-ear cress).